The primary structure comprises 297 residues: Elongation factor Ts (297 aa).

An involved in Mg(2+) ion dislocation from EF-Tu region spans residues 82-85 (TDFV).

It belongs to the EF-Ts family.

It localises to the cytoplasm. Its function is as follows. Associates with the EF-Tu.GDP complex and induces the exchange of GDP to GTP. It remains bound to the aminoacyl-tRNA.EF-Tu.GTP complex up to the GTP hydrolysis stage on the ribosome. The sequence is that of Elongation factor Ts from Azoarcus sp. (strain BH72).